The sequence spans 356 residues: DNA polymerase IV (356 aa).

Residues 6–187 form the UmuC domain; it reads IIHIDMDYFF…LDIGDFPGVG (182 aa). Mg(2+)-binding residues include aspartate 10 and aspartate 105. Glutamate 106 is a catalytic residue.

The protein belongs to the DNA polymerase type-Y family. As to quaternary structure, monomer. It depends on Mg(2+) as a cofactor.

It is found in the cytoplasm. The enzyme catalyses DNA(n) + a 2'-deoxyribonucleoside 5'-triphosphate = DNA(n+1) + diphosphate. Functionally, poorly processive, error-prone DNA polymerase involved in untargeted mutagenesis. Copies undamaged DNA at stalled replication forks, which arise in vivo from mismatched or misaligned primer ends. These misaligned primers can be extended by PolIV. Exhibits no 3'-5' exonuclease (proofreading) activity. May be involved in translesional synthesis, in conjunction with the beta clamp from PolIII. This chain is DNA polymerase IV, found in Staphylococcus epidermidis (strain ATCC 12228 / FDA PCI 1200).